The following is a 194-amino-acid chain: Probable thymidylate kinase (194 aa).

7 to 14 is an ATP binding site; it reads GIDGSGKT.

The protein belongs to the thymidylate kinase family.

It carries out the reaction dTMP + ATP = dTDP + ADP. This Methanothermobacter thermautotrophicus (strain ATCC 29096 / DSM 1053 / JCM 10044 / NBRC 100330 / Delta H) (Methanobacterium thermoautotrophicum) protein is Probable thymidylate kinase (tmk).